The chain runs to 211 residues: MKKQFLEKAVFTVAATAATVVLGNKMADADTYTLQEGDSFFSVAQRYHMDAYELASMNGKDITSLILPGQTLTVNGSAAPDNQAAAPTDTTQATTETNDANANTYPVGQCTWGVKAVATWAGDWWGNGGDWASSASAQGYTVGNTPAVGSIMCWTDGGYGHVAYVTAVGEDGKVQVLESNYKDQQWVDNYRGWFDPNNSGTPGSVSYIYPN.

The N-terminal stretch at 1 to 29 is a signal peptide; the sequence is MKKQFLEKAVFTVAATAATVVLGNKMADA. One can recognise a LysM domain in the interval 30-74; the sequence is DTYTLQEGDSFFSVAQRYHMDAYELASMNGKDITSLILPGQTLTV. The interval 77–101 is disordered; sequence SAAPDNQAAAPTDTTQATTETNDAN. A compositionally biased stretch (low complexity) spans 78–101; that stretch reads AAPDNQAAAPTDTTQATTETNDAN. Residues 85-209 form the Peptidase C51 domain; the sequence is AAPTDTTQAT…GTPGSVSYIY (125 aa).

This chain is Putative hydrolase SMU_367, found in Streptococcus mutans serotype c (strain ATCC 700610 / UA159).